The following is a 363-amino-acid chain: Sulfate/thiosulfate import ATP-binding protein CysA (363 aa).

The ABC transporter domain maps to 3-237; sequence IEINNISKYF…PATRFVLEFL (235 aa). 35-42 lines the ATP pocket; that stretch reads GPSGSGKT.

Belongs to the ABC transporter superfamily. Sulfate/tungstate importer (TC 3.A.1.6) family. The complex is composed of two ATP-binding proteins (CysA), two transmembrane proteins (CysT and CysW) and a solute-binding protein (CysP).

It is found in the cell inner membrane. The enzyme catalyses sulfate(out) + ATP + H2O = sulfate(in) + ADP + phosphate + H(+). It catalyses the reaction thiosulfate(out) + ATP + H2O = thiosulfate(in) + ADP + phosphate + H(+). In terms of biological role, part of the ABC transporter complex CysAWTP involved in sulfate/thiosulfate import. Responsible for energy coupling to the transport system. This Yersinia pseudotuberculosis serotype I (strain IP32953) protein is Sulfate/thiosulfate import ATP-binding protein CysA.